The primary structure comprises 385 residues: MGERKGQNKYYPPDFNPEKHGSLNRYHNSHPLRERARKLSQGILIIRFEMPYNIWCDGCKNHIGMGVRYNAEKKKVGNYYTTPIYRFRMKCHLCVNYIEMQTDPANCDYVIVSGASRKEERWDMEDNEQVLTTEHEKKEKLETDAMFRLEHGEADRSTLKKALPTLSHIQEAQNAWKDDFALNSMLRRHFREKKKAMQEEEEKDQALQAKANLAIPLVPESEDDRRLAALLRLHTLDSYEDKQRMKRTEIIHRSWFPSAQGPSTSSSKASTVLKKLCRGRRPPTGSAGAPGDLGIVRRKSREAPESPQCTADNSLSEEPRGPPGTTPDSKTLQGTAEAPRTSKTLESKRNCSDQALPLGSSQEDLLHPNTPNASLVADYSDSESE.

The segment at methionine 1–tyrosine 26 is disordered. Serine 40 carries the phosphoserine modification. Residues leucine 182–isoleucine 215 adopt a coiled-coil conformation. Residues phenylalanine 256–glutamate 385 form a disordered region. Residues glutamine 260–serine 270 show a composition bias toward polar residues. Position 306 is a phosphoserine (serine 306). Polar residues-rich tracts occupy residues proline 307–serine 316 and glycine 359–alanine 373.

This sequence belongs to the CWC16 family.

The protein resides in the nucleus. May be involved in mRNA splicing. The chain is Probable splicing factor YJU2B from Rattus norvegicus (Rat).